Reading from the N-terminus, the 71-residue chain is UPF0435 protein SE_1565 (71 aa).

The protein belongs to the UPF0435 family.

The polypeptide is UPF0435 protein SE_1565 (Staphylococcus epidermidis (strain ATCC 12228 / FDA PCI 1200)).